The chain runs to 249 residues: uncharacterized protein (249 aa).

An ATP-binding site is contributed by 7-14 (GKGGCGKS).

This is an uncharacterized protein from Methanocaldococcus jannaschii (strain ATCC 43067 / DSM 2661 / JAL-1 / JCM 10045 / NBRC 100440) (Methanococcus jannaschii).